Consider the following 411-residue polypeptide: Indian hedgehog protein (411 aa).

The N-terminal stretch at 1-27 (MSPARLRPRLHFCLVLLLLLVVPAAWG) is a signal peptide. The N-palmitoyl cysteine moiety is linked to residue cysteine 28. Glutamate 94, glutamate 95, aspartate 100, threonine 130, glutamate 131, aspartate 134, and aspartate 136 together coordinate Ca(2+). 3 residues coordinate Zn(2+): histidine 145, aspartate 152, and histidine 187. Residue glycine 202 is the site of Cholesterol glycine ester attachment. Asparagine 282 carries an N-linked (GlcNAc...) asparagine glycan.

Belongs to the hedgehog family. As to quaternary structure, multimer. In terms of assembly, interacts with BOC and CDON. Interacts with PTCH1. Interacts with glypican GPC3. Cholesterylation is required for N-product targeting to lipid rafts and multimerization. In terms of processing, the C-terminal domain displays an autoproteolysis activity and a cholesterol transferase activity. Both activities result in the cleavage of the full-length protein and covalent attachment of a cholesterol moiety to the C-terminal of the newly generated N-product. The N-product is the active species in both local and long-range signaling, whereas the C-product is degraded in the endoplasmic reticulum. Post-translationally, N-palmitoylation by HHAT of N-product is required for indian hedgehog protein N-product multimerization and full activity. In terms of tissue distribution, expressed in embryonic lung, and in adult kidney and liver.

It localises to the cell membrane. The protein resides in the endoplasmic reticulum membrane. It is found in the golgi apparatus membrane. The protein localises to the secreted. It catalyses the reaction glycyl-L-cysteinyl-[protein] + cholesterol + H(+) = [protein]-C-terminal glycyl cholesterol ester + N-terminal L-cysteinyl-[protein]. Its function is as follows. Plays a role in embryonic morphogenesis; it is involved in the regulation of endochondral skeleton formation, and the development of retinal pigment epithelium (RPE), photoreceptors and periocular tissues. The C-terminal part of the indian hedgehog protein precursor displays an autoproteolysis and a cholesterol transferase activity. Both activities result in the cleavage of the full-length protein into two parts followed by the covalent attachment of a cholesterol moiety to the C-terminal of the newly generated N-product. Both activities occur in the endoplasmic reticulum. Plays a role in hedgehog paracrine signaling. Associated with the very-low-density lipoprotein (VLDL) particles to function as a circulating morphogen for endothelial cell integrity maintenance. In terms of biological role, the dually lipidated indian hedgehog protein N-product is a morphogen which is essential for a variety of patterning events during development. Binds to the patched (PTCH1) receptor, which functions in association with smoothened (SMO), to activate the transcription of target genes. Plays a role in morphogenesis of the skeleton by coordinating growth and differentiation of the endochondral skeleton. Positively regulates PTHLH expression during endochondral bone formation preventing chondrocyte hypertrophy. In contrast, participates in normal chondrocyte proliferation in a PTHLH-independent pathway. The sequence is that of Indian hedgehog protein from Homo sapiens (Human).